A 515-amino-acid polypeptide reads, in one-letter code: Maturase K (515 aa).

Belongs to the intron maturase 2 family. MatK subfamily.

The protein localises to the plastid. It localises to the chloroplast. Its function is as follows. Usually encoded in the trnK tRNA gene intron. Probably assists in splicing its own and other chloroplast group II introns. The polypeptide is Maturase K (Helonias bullata (Swamp pink)).